The sequence spans 102 residues: Amoebiasin-1 (102 aa).

A BC loop motif is present at residues 27–32; sequence NPTTGY. A DE loop motif is present at residues 51–61; the sequence is DQHAPGICGCG. Positions 85–93 match the FG loop motif; that stretch reads PWAPNANDR.

Belongs to the protease inhibitor I42 family. As to quaternary structure, monomer. During oxidative conditions, forms homooligomers; disulfide-linked. Interacts with cysteine protease CP2. Interacts with cysteine protease CP5. In terms of processing, during oxidative conditions, cys-39, cys-58 and cys-60 react to form intra- and inter-molecular disulfide bonds resulting in the loss of the protein inhibitory activity.

It localises to the cytoplasm. Functionally, cysteine protease inhibitor. Inhibits cysteine proteases CP1, CP2 and CP5. May protect the cytosol against cysteine proteases released by damaged intracellular vesicles. This chain is Amoebiasin-1, found in Entamoeba histolytica (strain ATCC 30459 / HM-1:IMSS / ABRM).